The sequence spans 580 residues: Putative monoterpene synthase 8 (580 aa).

The transit peptide at 1-44 directs the protein to the chloroplast; sequence MACTSNLSSLSKSWAVLDVPRGAPKATGLWLKRQFIFKTSRICM. Mg(2+)-binding residues include Asp-333, Asp-337, Asp-478, Thr-482, and Glu-486. The DDXXD motif signature appears at 333–337; that stretch reads DDIFD.

This sequence belongs to the terpene synthase family. Tpsg subfamily. Monomer. Requires Mg(2+) as cofactor. It depends on Mn(2+) as a cofactor. In terms of tissue distribution, confined to flowers.

The protein localises to the plastid. The protein resides in the chloroplast. It participates in secondary metabolite biosynthesis; terpenoid biosynthesis. Monoterpene synthase (mono-TPS) involved in the biosynthesis of monoterpenes natural products, constituent of coffee beverage aroma. The chain is Putative monoterpene synthase 8 from Coffea arabica (Arabian coffee).